We begin with the raw amino-acid sequence, 257 residues long: Global transcriptional regulator CodY (257 aa).

Residues 1–155 form a GAF domain region; sequence MSLLSKTREL…AATVIGMEIL (155 aa). Residues 203-222 constitute a DNA-binding region (H-T-H motif); the sequence is ASKVADRVGITRSVIVNALR.

It belongs to the CodY family.

It is found in the cytoplasm. DNA-binding global transcriptional regulator which is involved in the adaptive response to starvation and acts by directly or indirectly controlling the expression of numerous genes in response to nutrient availability. During rapid exponential growth, CodY is highly active and represses genes whose products allow adaptation to nutrient depletion. The sequence is that of Global transcriptional regulator CodY from Staphylococcus epidermidis (strain ATCC 12228 / FDA PCI 1200).